We begin with the raw amino-acid sequence, 954 residues long: Glycine dehydrogenase (decarboxylating) (954 aa).

K706 bears the N6-(pyridoxal phosphate)lysine mark.

The protein belongs to the GcvP family. As to quaternary structure, the glycine cleavage system is composed of four proteins: P, T, L and H. The cofactor is pyridoxal 5'-phosphate.

The enzyme catalyses N(6)-[(R)-lipoyl]-L-lysyl-[glycine-cleavage complex H protein] + glycine + H(+) = N(6)-[(R)-S(8)-aminomethyldihydrolipoyl]-L-lysyl-[glycine-cleavage complex H protein] + CO2. In terms of biological role, the glycine cleavage system catalyzes the degradation of glycine. The P protein binds the alpha-amino group of glycine through its pyridoxal phosphate cofactor; CO(2) is released and the remaining methylamine moiety is then transferred to the lipoamide cofactor of the H protein. This is Glycine dehydrogenase (decarboxylating) from Thermosynechococcus vestitus (strain NIES-2133 / IAM M-273 / BP-1).